Reading from the N-terminus, the 524-residue chain is MTTTPKSEQDRVIIFDTTLRDGEQCPGATMTFEEKLNVAAMLDEMGVDVIEAGYPFASDGDFEAVHEIAKRSKNSVICGLSRAAHKDIDRCAEAIKPAERGRIHTFLSTSPVHMKYKLQMEAAQVYEMVISSVTRARNHTDDVEWSAEDATRTEFDFLCRCIEAAIKAGATTINLPDTVGYAVPEEYREMFRKVRETVPNADKARFSVHCHDDLGMAVANSIAGVQGGARQIECTINGIGERAGNAALEEVVMAMRVRQDKVPYWNRIESKMLTHASKTVSAATSFPVQYNKAIVGRNAFAHESGIHQDGMIKNAQTYEIMTPETVGVKGTSLVMGKHSGRAGLIHKMEELGYKLSRNQIEDVFVRFKALADRKKDVYDEDIEALVDEQLLHGQDLIRLKSLTVIAGTHGPQRATMKIDVDGQLRIEEAEGNGPVDAVFNCIKALVPHDAKLELYQVHAVTEGTDAQAEVSVRLSHEGRSMTARAADPDTLVASAKAYLGALNKIVAKRQRDVRQDAPAVAVAG.

One can recognise a Pyruvate carboxyltransferase domain in the interval 12–274; the sequence is VIIFDTTLRD…WNRIESKMLT (263 aa). 4 residues coordinate Mn(2+): D21, H209, H211, and N245. Positions 398-524 are regulatory domain; it reads RLKSLTVIAG…QDAPAVAVAG (127 aa).

It belongs to the alpha-IPM synthase/homocitrate synthase family. LeuA type 1 subfamily. As to quaternary structure, homodimer. Requires Mn(2+) as cofactor.

The protein resides in the cytoplasm. The enzyme catalyses 3-methyl-2-oxobutanoate + acetyl-CoA + H2O = (2S)-2-isopropylmalate + CoA + H(+). The protein operates within amino-acid biosynthesis; L-leucine biosynthesis; L-leucine from 3-methyl-2-oxobutanoate: step 1/4. Its function is as follows. Catalyzes the condensation of the acetyl group of acetyl-CoA with 3-methyl-2-oxobutanoate (2-ketoisovalerate) to form 3-carboxy-3-hydroxy-4-methylpentanoate (2-isopropylmalate). This chain is 2-isopropylmalate synthase, found in Rhodopseudomonas palustris (strain BisB5).